An 89-amino-acid chain; its full sequence is UPF0223 protein BcerKBAB4_3787 (89 aa).

Belongs to the UPF0223 family.

The protein is UPF0223 protein BcerKBAB4_3787 of Bacillus mycoides (strain KBAB4) (Bacillus weihenstephanensis).